Here is a 298-residue protein sequence, read N- to C-terminus: Protease HtpX homolog (298 aa).

2 helical membrane passes run Leu-15–Phe-35 and Pro-39–Gln-59. Residue His-143 participates in Zn(2+) binding. The active site involves Glu-144. A Zn(2+)-binding site is contributed by His-147. 2 helical membrane passes run Ile-153–Ala-173 and Met-197–Leu-217. Glu-227 contacts Zn(2+).

The protein belongs to the peptidase M48B family. It depends on Zn(2+) as a cofactor.

It localises to the cell membrane. In Lactobacillus helveticus (strain DPC 4571), this protein is Protease HtpX homolog.